A 118-amino-acid chain; its full sequence is uncharacterized protein (118 aa).

A helical membrane pass occupies residues 41 to 61; the sequence is IFLLIIITIIFALTMYTSVQV.

The protein localises to the host membrane. This is an uncharacterized protein from Ostreid herpesvirus 1 (isolate France) (OsHV-1).